Here is a 369-residue protein sequence, read N- to C-terminus: Phenylalanine--tRNA ligase alpha subunit (369 aa).

Glu269 contacts Mg(2+).

It belongs to the class-II aminoacyl-tRNA synthetase family. Phe-tRNA synthetase alpha subunit type 1 subfamily. In terms of assembly, tetramer of two alpha and two beta subunits. Mg(2+) serves as cofactor.

The protein localises to the cytoplasm. It catalyses the reaction tRNA(Phe) + L-phenylalanine + ATP = L-phenylalanyl-tRNA(Phe) + AMP + diphosphate + H(+). The chain is Phenylalanine--tRNA ligase alpha subunit from Brucella melitensis biotype 1 (strain ATCC 23456 / CCUG 17765 / NCTC 10094 / 16M).